The following is a 351-amino-acid chain: Cell division protein FtsZ (351 aa).

GTP is bound by residues 31–35, 118–120, Glu149, Arg153, and Asp197; these read GAGNN and GTG.

This sequence belongs to the FtsZ family. Homodimer. Polymerizes to form a dynamic ring structure in a strictly GTP-dependent manner. Interacts directly with several other division proteins. Interacts with FtsA.

It is found in the cytoplasm. Essential cell division protein that forms a contractile ring structure (Z ring) at the future cell division site. The regulation of the ring assembly controls the timing and the location of cell division. One of the functions of the FtsZ ring is to recruit other cell division proteins to the septum to produce a new cell wall between the dividing cells. Binds GTP and shows GTPase activity. This chain is Cell division protein FtsZ, found in Thermotoga maritima (strain ATCC 43589 / DSM 3109 / JCM 10099 / NBRC 100826 / MSB8).